Here is a 337-residue protein sequence, read N- to C-terminus: tRNA N6-adenosine threonylcarbamoyltransferase (337 aa).

Fe cation contacts are provided by histidine 110 and histidine 114. Residues 133–137 (MVSGG), aspartate 166, glycine 179, aspartate 183, and asparagine 276 contribute to the substrate site. Aspartate 302 contributes to the Fe cation binding site.

It belongs to the KAE1 / TsaD family. The cofactor is Fe(2+).

It is found in the cytoplasm. The catalysed reaction is L-threonylcarbamoyladenylate + adenosine(37) in tRNA = N(6)-L-threonylcarbamoyladenosine(37) in tRNA + AMP + H(+). Its function is as follows. Required for the formation of a threonylcarbamoyl group on adenosine at position 37 (t(6)A37) in tRNAs that read codons beginning with adenine. Is involved in the transfer of the threonylcarbamoyl moiety of threonylcarbamoyl-AMP (TC-AMP) to the N6 group of A37, together with TsaE and TsaB. TsaD likely plays a direct catalytic role in this reaction. This is tRNA N6-adenosine threonylcarbamoyltransferase from Fervidobacterium nodosum (strain ATCC 35602 / DSM 5306 / Rt17-B1).